Here is a 76-residue protein sequence, read N- to C-terminus: Translational regulator CsrA (76 aa).

It belongs to the CsrA/RsmA family. Homodimer; the beta-strands of each monomer intercalate to form a hydrophobic core, while the alpha-helices form wings that extend away from the core.

It is found in the cytoplasm. Its function is as follows. A translational regulator that binds mRNA to regulate translation initiation and/or mRNA stability. Usually binds in the 5'-UTR at or near the Shine-Dalgarno sequence preventing ribosome-binding, thus repressing translation. Its main target seems to be the major flagellin gene, while its function is anatagonized by FliW. This chain is Translational regulator CsrA, found in Pseudothermotoga lettingae (strain ATCC BAA-301 / DSM 14385 / NBRC 107922 / TMO) (Thermotoga lettingae).